Here is a 41-residue protein sequence, read N- to C-terminus: Large ribosomal subunit protein bL36 (41 aa).

Belongs to the bacterial ribosomal protein bL36 family.

The chain is Large ribosomal subunit protein bL36 from Rhodopseudomonas palustris (strain HaA2).